A 387-amino-acid polypeptide reads, in one-letter code: MEQVVIVDAIRTPMGRSKGGAFRNVRAEDLSAHLMRSLLARNPALEAAALDDIYWGCVQQTLEQGFNIARNAALLAEVPHSVPAVTVNRLCGSSMQALHDAARMIMTGDAQACLVGGVEHMGHVPMSHGVDFHPGLSRNVAKAAGMMGLTAEMLARMHGISREMQDAFAARSHARAWAATQSAAFKNEIIPTGGHDADGVLKQFNYDEVIRPETTVEALATLRPAFDPVNGTVTAGTSSALSDGAAAMLVMSESRAHELGLKPRARVRSMAVVGCDPSIMGYGPVPASKLALKKAGLSASDIGVFEMNEAFAAQILPCIKDLGLMEQIDEKINLNGGAIALGHPLGCSGARISTTLLNLMERKDVQFGLATMCIGLGQGIATVFERV.

Cysteine 91 functions as the Acyl-thioester intermediate in the catalytic mechanism. Residues histidine 343 and cysteine 373 each act as proton acceptor in the active site.

This sequence belongs to the thiolase-like superfamily. Thiolase family. In terms of assembly, heterotetramer of two alpha chains (FadB) and two beta chains (FadA).

The protein localises to the cytoplasm. It carries out the reaction an acyl-CoA + acetyl-CoA = a 3-oxoacyl-CoA + CoA. It functions in the pathway lipid metabolism; fatty acid beta-oxidation. In terms of biological role, catalyzes the final step of fatty acid oxidation in which acetyl-CoA is released and the CoA ester of a fatty acid two carbons shorter is formed. This Escherichia coli O9:H4 (strain HS) protein is 3-ketoacyl-CoA thiolase.